The sequence spans 530 residues: Ubiquitin carboxyl-terminal hydrolase 17-like protein 21 (530 aa).

Positions 80-375 constitute a USP domain; that stretch reads AGLQNMGNTC…QAYVLFYIQK (296 aa). Cys89 acts as the Nucleophile in catalysis. The Proton acceptor role is filled by His334. Basic and acidic residues-rich tracts occupy residues 382-392 and 398-412; these read SESVSRGREPR and DTDR…KRDH. Disordered stretches follow at residues 382–412 and 477–530; these read SESV…KRDH and NHHP…LVCQ. Residues 493–505 show a composition bias toward polar residues; the sequence is TPTHQESMNTGTL. The segment covering 510-524 has biased composition (basic residues); that stretch reads GRARRSKGKNKHSKR.

It belongs to the peptidase C19 family. USP17 subfamily.

Its subcellular location is the nucleus. It is found in the endoplasmic reticulum. It carries out the reaction Thiol-dependent hydrolysis of ester, thioester, amide, peptide and isopeptide bonds formed by the C-terminal Gly of ubiquitin (a 76-residue protein attached to proteins as an intracellular targeting signal).. In terms of biological role, deubiquitinating enzyme that removes conjugated ubiquitin from specific proteins to regulate different cellular processes that may include cell proliferation, progression through the cell cycle, apoptosis, cell migration, and the cellular response to viral infection. The chain is Ubiquitin carboxyl-terminal hydrolase 17-like protein 21 (USP17L21) from Homo sapiens (Human).